The primary structure comprises 185 residues: Ribosome-recycling factor (185 aa).

The protein belongs to the RRF family.

Its subcellular location is the cytoplasm. Responsible for the release of ribosomes from messenger RNA at the termination of protein biosynthesis. May increase the efficiency of translation by recycling ribosomes from one round of translation to another. The protein is Ribosome-recycling factor of Clostridioides difficile (strain 630) (Peptoclostridium difficile).